An 888-amino-acid polypeptide reads, in one-letter code: Pyruvate dehydrogenase E1 component (888 aa).

As to quaternary structure, homodimer. Part of the PDH complex, consisting of multiple copies of pyruvate dehydrogenase (E1), dihydrolipoamide acetyltransferase (E2) and lipoamide dehydrogenase (E3). Thiamine diphosphate is required as a cofactor.

It carries out the reaction N(6)-[(R)-lipoyl]-L-lysyl-[protein] + pyruvate + H(+) = N(6)-[(R)-S(8)-acetyldihydrolipoyl]-L-lysyl-[protein] + CO2. In terms of biological role, component of the pyruvate dehydrogenase (PDH) complex, that catalyzes the overall conversion of pyruvate to acetyl-CoA and CO(2). The sequence is that of Pyruvate dehydrogenase E1 component (aceE) from Buchnera aphidicola subsp. Schizaphis graminum (strain Sg).